The chain runs to 120 residues: MKKLTKTHSHRQQKLASIINEALIEILRRGKMLDSRLFDCPLTITKVIVTADLKIANCYFLPFNTKLTIDEIMDALNNSKNAIRNFITNKINMKFSPDIRFHYDHGFDNAIKVAHLLKDL.

This sequence belongs to the RbfA family. Monomer. Binds 30S ribosomal subunits, but not 50S ribosomal subunits or 70S ribosomes.

It is found in the cytoplasm. In terms of biological role, one of several proteins that assist in the late maturation steps of the functional core of the 30S ribosomal subunit. Associates with free 30S ribosomal subunits (but not with 30S subunits that are part of 70S ribosomes or polysomes). Required for efficient processing of 16S rRNA. May interact with the 5'-terminal helix region of 16S rRNA. The protein is Ribosome-binding factor A of Rickettsia conorii (strain ATCC VR-613 / Malish 7).